Reading from the N-terminus, the 292-residue chain is Elongation factor Ts (292 aa).

The segment at 80–83 (TDFV) is involved in Mg(2+) ion dislocation from EF-Tu.

Belongs to the EF-Ts family.

The protein resides in the cytoplasm. Its function is as follows. Associates with the EF-Tu.GDP complex and induces the exchange of GDP to GTP. It remains bound to the aminoacyl-tRNA.EF-Tu.GTP complex up to the GTP hydrolysis stage on the ribosome. The chain is Elongation factor Ts from Ralstonia nicotianae (strain ATCC BAA-1114 / GMI1000) (Ralstonia solanacearum).